The primary structure comprises 236 residues: Virion protein US10 homolog (236 aa).

The interval 1–32 is disordered; that stretch reads MDGAYGHVHNGSPMAVDGEESGAGTGTGAGAD. The segment covering 21–31 has biased composition (gly residues); the sequence is SGAGTGTGAGA. Residues 138 to 150 fold into a zinc finger; the sequence is CAYWCCLGHAFAC.

Belongs to the herpesviridae US10 family. Post-translationally, phosphorylated.

The protein resides in the virion tegument. It localises to the host nucleus matrix. In Equine herpesvirus 1 (strain Kentucky A) (EHV-1), this protein is Virion protein US10 homolog (IR5).